Reading from the N-terminus, the 160-residue chain is Phosphopantetheine adenylyltransferase (160 aa).

Thr-9 serves as a coordination point for substrate. ATP-binding positions include 9–10 (TF) and His-17. Residues Lys-41, Leu-73, and Arg-87 each coordinate substrate. ATP-binding positions include 88-90 (GLR), Glu-98, and 123-129 (YSFISST).

The protein belongs to the bacterial CoaD family. As to quaternary structure, homohexamer. The cofactor is Mg(2+).

Its subcellular location is the cytoplasm. The enzyme catalyses (R)-4'-phosphopantetheine + ATP + H(+) = 3'-dephospho-CoA + diphosphate. The protein operates within cofactor biosynthesis; coenzyme A biosynthesis; CoA from (R)-pantothenate: step 4/5. In terms of biological role, reversibly transfers an adenylyl group from ATP to 4'-phosphopantetheine, yielding dephospho-CoA (dPCoA) and pyrophosphate. The sequence is that of Phosphopantetheine adenylyltransferase from Ectopseudomonas mendocina (strain ymp) (Pseudomonas mendocina).